Consider the following 281-residue polypeptide: ATP synthase gamma chain (281 aa).

The protein belongs to the ATPase gamma chain family. As to quaternary structure, F-type ATPases have 2 components, CF(1) - the catalytic core - and CF(0) - the membrane proton channel. CF(1) has five subunits: alpha(3), beta(3), gamma(1), delta(1), epsilon(1). CF(0) has three main subunits: a, b and c.

It localises to the cell inner membrane. Functionally, produces ATP from ADP in the presence of a proton gradient across the membrane. The gamma chain is believed to be important in regulating ATPase activity and the flow of protons through the CF(0) complex. The polypeptide is ATP synthase gamma chain (Ehrlichia canis (strain Jake)).